The chain runs to 631 residues: tRNA uridine 5-carboxymethylaminomethyl modification enzyme MnmG (631 aa).

Gly-15–Gly-20 lines the FAD pocket. Positions Thr-203 to Thr-232 are disordered. Residues Lys-216–Thr-232 are compositionally biased toward basic and acidic residues. Gly-276 to Phe-290 serves as a coordination point for NAD(+).

It belongs to the MnmG family. In terms of assembly, homodimer. Heterotetramer of two MnmE and two MnmG subunits. FAD serves as cofactor.

The protein localises to the cytoplasm. NAD-binding protein involved in the addition of a carboxymethylaminomethyl (cmnm) group at the wobble position (U34) of certain tRNAs, forming tRNA-cmnm(5)s(2)U34. The chain is tRNA uridine 5-carboxymethylaminomethyl modification enzyme MnmG from Lactobacillus gasseri (strain ATCC 33323 / DSM 20243 / BCRC 14619 / CIP 102991 / JCM 1131 / KCTC 3163 / NCIMB 11718 / NCTC 13722 / AM63).